A 404-amino-acid chain; its full sequence is Nesprin-4 (404 aa).

Disordered regions lie at residues 1 to 91 and 277 to 347; these read MALS…GGKH and GQRG…GAPD. The Cytoplasmic portion of the chain corresponds to 1–355; the sequence is MALSLPLGPR…PDPASRQPLT (355 aa). Polar residues predominate over residues 39-52; the sequence is EESTSPEQAQTLGQ. Residues 307-320 show a composition bias toward basic residues; sequence HQKRLARHQRHSLL. A KASH domain is found at 347-404; the sequence is DPASRQPLTFLLILFLLFLLLVGAMFLLPASGGPCCSHARIPRTPYLVLSYVNGLPPV. Residues 356 to 376 traverse the membrane as a helical; Anchor for type IV membrane protein segment; the sequence is FLLILFLLFLLLVGAMFLLPA. Over 377–404 the chain is Perinuclear space; it reads SGGPCCSHARIPRTPYLVLSYVNGLPPV.

It belongs to the nesprin family. Core component of LINC complexes which are composed of inner nuclear membrane SUN domain-containing proteins coupled to outer nuclear membrane KASH domain-containing nesprins. SUN and KASH domain-containing proteins seem to bind each other promiscuously; however, differentially expression of LINC complex constituents can give rise to specific assemblies. Probably part of a SUN1-containing LINC complex. Interacts with kinesins KIF5B and KLC1. The disulfid bond with SUN1 or SUN2 is required for stability of the respective LINC complex under tensile forces.

The protein resides in the nucleus outer membrane. Its function is as follows. As a component of the LINC (LInker of Nucleoskeleton and Cytoskeleton) complex, involved in the connection between the nuclear lamina and the cytoskeleton. The nucleocytoplasmic interactions established by the LINC complex play an important role in the transmission of mechanical forces across the nuclear envelope and in nuclear movement and positioning. Behaves as a kinesin cargo, providing a functional binding site for kinesin-1 at the nuclear envelope. Hence may contribute to the establishment of secretory epithelial morphology by promoting kinesin-dependent apical migration of the centrosome and Golgi apparatus and basal localization of the nucleus. This Homo sapiens (Human) protein is Nesprin-4 (SYNE4).